Here is a 465-residue protein sequence, read N- to C-terminus: Opioid growth factor receptor-like protein 1 (465 aa).

Disordered regions lie at residues 1–89 (MGNL…GNAK) and 309–465 (ENFI…TSSG). Composition is skewed to basic and acidic residues over residues 48–59 (REQPEQPPERAG), 316–325 (PKKEQPERSK), 363–396 (TVEE…RNSE), and 426–440 (SEKD…KDSE). Positions 442–465 (PENTSCHAEVVSQQNVTNPQTSSG) are enriched in polar residues.

This sequence belongs to the opioid growth factor receptor family.

This Rattus norvegicus (Rat) protein is Opioid growth factor receptor-like protein 1 (Ogfrl1).